Reading from the N-terminus, the 110-residue chain is Phosphoribosyl-ATP pyrophosphatase (110 aa).

Belongs to the PRA-PH family.

The protein localises to the cytoplasm. The enzyme catalyses 1-(5-phospho-beta-D-ribosyl)-ATP + H2O = 1-(5-phospho-beta-D-ribosyl)-5'-AMP + diphosphate + H(+). Its pathway is amino-acid biosynthesis; L-histidine biosynthesis; L-histidine from 5-phospho-alpha-D-ribose 1-diphosphate: step 2/9. The chain is Phosphoribosyl-ATP pyrophosphatase (hisE) from Clostridium acetobutylicum (strain ATCC 824 / DSM 792 / JCM 1419 / IAM 19013 / LMG 5710 / NBRC 13948 / NRRL B-527 / VKM B-1787 / 2291 / W).